Consider the following 61-residue polypeptide: Small ribosomal subunit protein uS14 (61 aa).

The Zn(2+) site is built by C24, C27, C40, and C43.

Belongs to the universal ribosomal protein uS14 family. Zinc-binding uS14 subfamily. Part of the 30S ribosomal subunit. Contacts proteins S3 and S10. Requires Zn(2+) as cofactor.

In terms of biological role, binds 16S rRNA, required for the assembly of 30S particles and may also be responsible for determining the conformation of the 16S rRNA at the A site. This is Small ribosomal subunit protein uS14 from Anaeromyxobacter dehalogenans (strain 2CP-1 / ATCC BAA-258).